A 296-amino-acid chain; its full sequence is NAD kinase (296 aa).

Catalysis depends on aspartate 74, which acts as the Proton acceptor. Residues aspartate 74–glycine 75, asparagine 148–aspartate 149, arginine 176, aspartate 178, and threonine 189–serine 194 each bind NAD(+).

This sequence belongs to the NAD kinase family. Requires a divalent metal cation as cofactor.

It localises to the cytoplasm. It carries out the reaction NAD(+) + ATP = ADP + NADP(+) + H(+). Its function is as follows. Involved in the regulation of the intracellular balance of NAD and NADP, and is a key enzyme in the biosynthesis of NADP. Catalyzes specifically the phosphorylation on 2'-hydroxyl of the adenosine moiety of NAD to yield NADP. This Nitrosomonas europaea (strain ATCC 19718 / CIP 103999 / KCTC 2705 / NBRC 14298) protein is NAD kinase.